Here is a 142-residue protein sequence, read N- to C-terminus: ATP synthase epsilon chain (142 aa).

It belongs to the ATPase epsilon chain family. In terms of assembly, F-type ATPases have 2 components, CF(1) - the catalytic core - and CF(0) - the membrane proton channel. CF(1) has five subunits: alpha(3), beta(3), gamma(1), delta(1), epsilon(1). CF(0) has three main subunits: a, b and c.

The protein localises to the cell inner membrane. In terms of biological role, produces ATP from ADP in the presence of a proton gradient across the membrane. The polypeptide is ATP synthase epsilon chain (Shewanella denitrificans (strain OS217 / ATCC BAA-1090 / DSM 15013)).